The following is a 291-amino-acid chain: 5'-3' exonuclease (291 aa).

Positions 176 to 269 (APYQVVEYKG…DLTGLKPIQK (94 aa)) constitute a 5'-3' exonuclease domain.

5'-3' exonuclease acting preferentially on double-stranded DNA. The polypeptide is 5'-3' exonuclease (polA) (Mycoplasma genitalium (strain ATCC 33530 / DSM 19775 / NCTC 10195 / G37) (Mycoplasmoides genitalium)).